A 305-amino-acid polypeptide reads, in one-letter code: MKVYFVFLCLLPSLISGASILPEPRKDVRASASNAEIQSLAEQFYAADTNKAASGDITLNLQYKASSTQTSSGTDFASQKLFNYVNEAKLFARPTFARLVDLLDNYVHTTGTAESVPTAEVNEQNAFIDEIFKTSIITKLSDFFISKGYYSSAASFKTDLKEMWFGLYTRTSGPLDSSGFEHVFHGEIHKGKISGLHNWVRLYLLEKSGQVNYLSYSSDGVWNGYPDIYAFQLKWSTYLKTLGSFFIGSSPEFDIAMYTLCYVTRPDSLCSVKMGGSIFQIQTYTWANSTYGNGKRYVASSYPNI.

A signal peptide spans 1 to 17 (MKVYFVFLCLLPSLISG). In terms of domain architecture, EndoU spans 33 to 305 (SNAEIQSLAE…RYVASSYPNI (273 aa)). Residues H182, H197, and K240 contribute to the active site. The N-linked (GlcNAc...) asparagine glycan is linked to N288.

The protein belongs to the ENDOU family. In terms of assembly, monomer. It depends on Mn(2+) as a cofactor.

It localises to the secreted. It carries out the reaction ribonucleotidyl-uridine-RNA = a 5'-end dephospho-uridine-RNA + a 3'-end 2',3'-cyclophospho-ribonucleotide-RNA. Functionally, endoribonuclease that cleaves single-stranded RNAs at 5' of uridylates and releases a product with a 2',3'-cyclic phosphate at the 3'-end. The polypeptide is Uridylate-specific endoribonuclease D (endou-d) (Xenopus laevis (African clawed frog)).